Reading from the N-terminus, the 289-residue chain is Diaminopimelate epimerase (289 aa).

Residues N13, Q47, and N67 each coordinate substrate. Catalysis depends on C76, which acts as the Proton donor. Residues 77-78 (GN), N167, N200, and 218-219 (ER) each bind substrate. C227 acts as the Proton acceptor in catalysis. Residue 228-229 (GT) coordinates substrate.

This sequence belongs to the diaminopimelate epimerase family. As to quaternary structure, homodimer.

The protein localises to the cytoplasm. It carries out the reaction (2S,6S)-2,6-diaminopimelate = meso-2,6-diaminopimelate. Its pathway is amino-acid biosynthesis; L-lysine biosynthesis via DAP pathway; DL-2,6-diaminopimelate from LL-2,6-diaminopimelate: step 1/1. Functionally, catalyzes the stereoinversion of LL-2,6-diaminopimelate (L,L-DAP) to meso-diaminopimelate (meso-DAP), a precursor of L-lysine and an essential component of the bacterial peptidoglycan. This chain is Diaminopimelate epimerase, found in Burkholderia mallei (strain NCTC 10247).